We begin with the raw amino-acid sequence, 242 residues long: Cysteine-rich venom protein helothermine (242 aa).

The first 19 residues, 1 to 19, serve as a signal peptide directing secretion; it reads MILLSLYLCLAAMLHQSEG. The 129-residue stretch at 41–169 folds into the SCP domain; it reads DKHNNLRRIV…TYKYYQVCQY (129 aa). Intrachain disulfides connect C77–C155, C94–C170, C150–C167, C189–C196, C192–C201, C205–C237, C214–C231, and C223–C235. Residues 205-237 enclose the ShKT domain; it reads CKQNDVYNNCPDLKKQVGCGHPIMKDCMATCKC.

The protein belongs to the CRISP family. As to expression, expressed by the venom gland.

It is found in the secreted. Its function is as follows. Alters a variety of ion channel activities, including voltage-gated potassium channels (Kv), voltage-gated calcium channels (L-, N-, and P-type) (Cav) and ryanodine receptors (RyR). Is toxic to mice (causes lethargy, partial paralysis of rear limbs and lowering of body temperature). In Heloderma horridum horridum (Mexican beaded lizard), this protein is Cysteine-rich venom protein helothermine.